The primary structure comprises 228 residues: Death domain-containing membrane protein NRADD (228 aa).

Topologically, residues 1-52 (MLYNVSKGVVYSDTALQGQDGDREGMWVGAGGALAPNTSSLFPPEPPGASSN) are extracellular. N-linked (GlcNAc...) asparagine glycosylation is found at N4 and N37. The chain crosses the membrane as a helical; Signal-anchor for type III membrane protein span at residues 53 to 73 (IIPVYCALLATVILGLLAYVA). At 74–228 (FKCWRSHKQR…SSPAESSSVV (155 aa)) the chain is on the cytoplasmic side. The segment at 87–122 (AKARTVELGDPDRDQRRGDSNVFVDSPPSLEPCIPS) is disordered. The segment covering 90 to 105 (RTVELGDPDRDQRRGD) has biased composition (basic and acidic residues). The region spanning 143–222 (EEVQRLLMMG…DVVQVLSSPA (80 aa)) is the Death domain.

As to quaternary structure, interacts with NGFR. Interacts with NTRK1. Interacts with SORT1. In terms of tissue distribution, detected in lung and testis.

The protein localises to the cell membrane. It is found in the nucleus. In terms of biological role, modulates NTRK1 signaling. Can activate several intracellular signaling pathways, leading to activation of JUN. Promotes apoptosis. Promotes translocation of SORT1 to the cell membrane, and thereby hinders lysosomal degradation of SOTR1 and promotes its interaction with NGFR. The sequence is that of Death domain-containing membrane protein NRADD (Nradd) from Mus musculus (Mouse).